Here is a 320-residue protein sequence, read N- to C-terminus: Calnexin-independence factor 1 (320 aa).

Residues 16-36 (SAETSVGEKQPKRKRSEVRAE) form a disordered region.

It is found in the nucleus. The protein localises to the nucleolus. Induces a stably inheritable state of calnexin independence called the Cin state when overexpressed. In Schizosaccharomyces pombe (strain 972 / ATCC 24843) (Fission yeast), this protein is Calnexin-independence factor 1 (cif1).